The following is a 423-amino-acid chain: Kynurenine--oxoglutarate transaminase 1 (423 aa).

G36 serves as a coordination point for substrate. Residue K82 is modified to N6-succinyllysine. N185 lines the substrate pocket. K247 is subject to N6-(pyridoxal phosphate)lysine. R398 lines the substrate pocket.

The protein belongs to the class-I pyridoxal-phosphate-dependent aminotransferase family. As to quaternary structure, homodimer. Pyridoxal 5'-phosphate is required as a cofactor. Detected in kidney.

It is found in the cytoplasm. Its subcellular location is the cytosol. The protein localises to the mitochondrion matrix. It catalyses the reaction L-kynurenine + 2-oxoglutarate = kynurenate + L-glutamate + H2O. The enzyme catalyses 3-phenylpyruvate + L-glutamine = 2-oxoglutaramate + L-phenylalanine. It carries out the reaction an S-substituted L-cysteine + H2O = a thiol + pyruvate + NH4(+). Its pathway is amino-acid degradation; L-kynurenine degradation; kynurenate from L-kynurenine: step 1/2. Its activity is regulated as follows. Inhibited by aminooxyacetate (in vitro). Functionally, catalyzes the irreversible transamination of the L-tryptophan metabolite L-kynurenine to form kynurenic acid (KA), an intermediate in the tryptophan catabolic pathway which is also a broad spectrum antagonist of the three ionotropic excitatory amino acid receptors among others. Metabolizes the cysteine conjugates of certain halogenated alkenes and alkanes to form reactive metabolites. Catalyzes the beta-elimination of S-conjugates and Se-conjugates of L-(seleno)cysteine, resulting in the cleavage of the C-S or C-Se bond. In Rattus norvegicus (Rat), this protein is Kynurenine--oxoglutarate transaminase 1.